Reading from the N-terminus, the 61-residue chain is uncharacterized protein (61 aa).

This is an uncharacterized protein from Acidianus convivator (ATV).